The primary structure comprises 804 residues: Phosphatidylinositol 4-kinase beta (804 aa).

Residues 55–245 (LEKVKMIHGS…GTKLRKLILS (191 aa)) form the PIK helical domain. Disordered stretches follow at residues 69–122 (LDKV…ARRR) and 251–309 (AHKK…EPVR). Composition is skewed to polar residues over residues 91 to 103 (KLTN…TSSR) and 281 to 300 (DATV…SNPK). A PI3K/PI4K catalytic domain is found at 523–789 (EPWEEKVRRI…MVDGSMRSIT (267 aa)). Positions 529–535 (VRRIREG) are G-loop. The segment at 656-664 (QVKDRHNGN) is catalytic loop. The tract at residues 675–699 (HIDFGFILSSSPRNLGFETSAFKLT) is activation loop.

This sequence belongs to the PI3/PI4-kinase family. Type III PI4K subfamily. The cofactor is Mg(2+). Mn(2+) is required as a cofactor.

It localises to the endomembrane system. The protein resides in the mitochondrion outer membrane. The protein localises to the rough endoplasmic reticulum membrane. It carries out the reaction a 1,2-diacyl-sn-glycero-3-phospho-(1D-myo-inositol) + ATP = a 1,2-diacyl-sn-glycero-3-phospho-(1D-myo-inositol 4-phosphate) + ADP + H(+). In terms of biological role, phosphorylates phosphatidylinositol (PI) in the first committed step in the production of the second messenger inositol-1,4,5,-trisphosphate (PIP). May play an important role in the inner ear development. The polypeptide is Phosphatidylinositol 4-kinase beta (pi4kb) (Xenopus laevis (African clawed frog)).